The chain runs to 343 residues: N-acetyl-gamma-glutamyl-phosphate reductase (343 aa).

The active site involves Cys147.

The protein belongs to the NAGSA dehydrogenase family. Type 1 subfamily.

The protein resides in the cytoplasm. The catalysed reaction is N-acetyl-L-glutamate 5-semialdehyde + phosphate + NADP(+) = N-acetyl-L-glutamyl 5-phosphate + NADPH + H(+). It functions in the pathway amino-acid biosynthesis; L-arginine biosynthesis; N(2)-acetyl-L-ornithine from L-glutamate: step 3/4. Functionally, catalyzes the NADPH-dependent reduction of N-acetyl-5-glutamyl phosphate to yield N-acetyl-L-glutamate 5-semialdehyde. In Staphylococcus saprophyticus subsp. saprophyticus (strain ATCC 15305 / DSM 20229 / NCIMB 8711 / NCTC 7292 / S-41), this protein is N-acetyl-gamma-glutamyl-phosphate reductase.